The primary structure comprises 348 residues: Dihydroorotase (348 aa).

Residues H17 and H19 each contribute to the Zn(2+) site. Substrate contacts are provided by residues H19–R21 and N45. Residues K103, H140, and H178 each contribute to the Zn(2+) site. Residue K103 is modified to N6-carboxylysine. H140 contributes to the substrate binding site. L223 provides a ligand contact to substrate. D251 serves as a coordination point for Zn(2+). D251 is an active-site residue. Residues H255 and A267 each contribute to the substrate site.

The protein belongs to the metallo-dependent hydrolases superfamily. DHOase family. Class II DHOase subfamily. As to quaternary structure, homodimer. It depends on Zn(2+) as a cofactor.

The catalysed reaction is (S)-dihydroorotate + H2O = N-carbamoyl-L-aspartate + H(+). The protein operates within pyrimidine metabolism; UMP biosynthesis via de novo pathway; (S)-dihydroorotate from bicarbonate: step 3/3. Functionally, catalyzes the reversible cyclization of carbamoyl aspartate to dihydroorotate. This chain is Dihydroorotase, found in Salmonella agona (strain SL483).